Consider the following 163-residue polypeptide: Staphylokinase (163 aa).

Residues 1-27 form the signal peptide; that stretch reads MLKRGLLFLTVLLLLFSFSSITNEVSA.

Belongs to the staphylokinase family.

The protein localises to the secreted. In terms of biological role, potent plasminogen activator that converts plasminogen into plasmin. It forms a 1:1 complex with plasmin, which in turn activates other plasminogen molecules. In Staphylococcus aureus (strain MRSA252), this protein is Staphylokinase (sak).